Reading from the N-terminus, the 250-residue chain is Lymphotoxin-beta (250 aa).

Over 1-26 the chain is Cytoplasmic; the sequence is MGAPGLETRAGGPNGKSYLLLASVGA. A helical; Signal-anchor for type II membrane protein transmembrane segment spans residues 27 to 47; it reads AVLGTLLLSVPITVLTVLALM. At 48-250 the chain is on the extracellular side; it reads PQEQGGQVAD…KTFFGAVMVG (203 aa). The 163-residue stretch at 87–249 folds into the THD domain; the sequence is PAAHLIGIAK…GKTFFGAVMV (163 aa). A glycan (N-linked (GlcNAc...) asparagine) is linked at N228.

Belongs to the tumor necrosis factor family. Heterotrimer of either two LTB and one LTA subunits or (less prevalent) two LTA and one LTB subunits.

The protein localises to the membrane. Its function is as follows. Cytokine that binds to LTBR/TNFRSF3. May play a specific role in immune response regulation. Provides the membrane anchor for the attachment of the heterotrimeric complex to the cell surface. The sequence is that of Lymphotoxin-beta (LTB) from Notamacropus eugenii (Tammar wallaby).